The following is a 180-amino-acid chain: Nucleoside triphosphate/diphosphate phosphatase (180 aa).

Catalysis depends on arginine 26, which acts as the Proton donor. Residues asparagine 90, aspartate 106, aspartate 108, aspartate 110, aspartate 123, and glutamate 126 each coordinate Mg(2+).

The protein belongs to the Ntdp family. Mg(2+) is required as a cofactor.

It catalyses the reaction a ribonucleoside 5'-triphosphate + H2O = a ribonucleoside 5'-diphosphate + phosphate + H(+). The enzyme catalyses a ribonucleoside 5'-diphosphate + H2O = a ribonucleoside 5'-phosphate + phosphate + H(+). Has nucleoside phosphatase activity towards nucleoside triphosphates and nucleoside diphosphates. This is Nucleoside triphosphate/diphosphate phosphatase from Staphylococcus aureus (strain Mu3 / ATCC 700698).